A 557-amino-acid chain; its full sequence is Dihydroxy-acid dehydratase 2 (557 aa).

C50 contributes to the [2Fe-2S] cluster binding site. D82 serves as a coordination point for Mg(2+). A [2Fe-2S] cluster-binding site is contributed by C123. Residues D124 and K125 each coordinate Mg(2+). K125 is subject to N6-carboxylysine. C195 is a binding site for [2Fe-2S] cluster. E447 lines the Mg(2+) pocket. S473 functions as the Proton acceptor in the catalytic mechanism.

This sequence belongs to the IlvD/Edd family. In terms of assembly, homodimer. The cofactor is [2Fe-2S] cluster. Mg(2+) is required as a cofactor.

It carries out the reaction (2R)-2,3-dihydroxy-3-methylbutanoate = 3-methyl-2-oxobutanoate + H2O. It catalyses the reaction (2R,3R)-2,3-dihydroxy-3-methylpentanoate = (S)-3-methyl-2-oxopentanoate + H2O. Its pathway is amino-acid biosynthesis; L-isoleucine biosynthesis; L-isoleucine from 2-oxobutanoate: step 3/4. It participates in amino-acid biosynthesis; L-valine biosynthesis; L-valine from pyruvate: step 3/4. Functions in the biosynthesis of branched-chain amino acids. Catalyzes the dehydration of (2R,3R)-2,3-dihydroxy-3-methylpentanoate (2,3-dihydroxy-3-methylvalerate) into 2-oxo-3-methylpentanoate (2-oxo-3-methylvalerate) and of (2R)-2,3-dihydroxy-3-methylbutanoate (2,3-dihydroxyisovalerate) into 2-oxo-3-methylbutanoate (2-oxoisovalerate), the penultimate precursor to L-isoleucine and L-valine, respectively. The protein is Dihydroxy-acid dehydratase 2 of Burkholderia lata (strain ATCC 17760 / DSM 23089 / LMG 22485 / NCIMB 9086 / R18194 / 383).